The primary structure comprises 215 residues: Dual specificity phosphatase 29 (215 aa).

The Tyrosine-protein phosphatase domain occupies 53–201 (HVNEVWPRLH…LRELDKQLVK (149 aa)). 145–152 (HCAMGRSR) is a binding site for substrate. Catalysis depends on Cys-146, which acts as the Phosphocysteine intermediate.

This sequence belongs to the protein-tyrosine phosphatase family. Non-receptor class dual specificity subfamily. In terms of assembly, homodimer. Interacts with PRKAA2.

The protein resides in the cytoplasm. It localises to the nucleus. It carries out the reaction O-phospho-L-tyrosyl-[protein] + H2O = L-tyrosyl-[protein] + phosphate. The catalysed reaction is O-phospho-L-seryl-[protein] + H2O = L-seryl-[protein] + phosphate. The enzyme catalyses O-phospho-L-threonyl-[protein] + H2O = L-threonyl-[protein] + phosphate. In terms of biological role, dual specificity phosphatase able to dephosphorylate phosphotyrosine, phosphoserine and phosphothreonine residues within the same substrate, with a preference for phosphotyrosine as a substrate. Involved in the modulation of intracellular signaling cascades. In skeletal muscle regulates systemic glucose homeostasis by activating, AMPK, an energy sensor protein kinase. Affects MAP kinase signaling though modulation of the MAPK1/2 cascade in skeletal muscle promoting muscle cell differentiation, development and atrophy. In Rattus norvegicus (Rat), this protein is Dual specificity phosphatase 29 (Dusp29).